We begin with the raw amino-acid sequence, 149 residues long: Large ribosomal subunit protein bL9 (149 aa).

It belongs to the bacterial ribosomal protein bL9 family.

In terms of biological role, binds to the 23S rRNA. This is Large ribosomal subunit protein bL9 from Sulfurihydrogenibium sp. (strain YO3AOP1).